Here is a 149-residue protein sequence, read N- to C-terminus: Transcriptional regulator MraZ (149 aa).

SpoVT-AbrB domains lie at 6–52 (HAHR…TPPD) and 81–124 (SEEV…DKRE).

The protein belongs to the MraZ family. Forms oligomers.

The protein resides in the cytoplasm. It localises to the nucleoid. This chain is Transcriptional regulator MraZ, found in Maridesulfovibrio salexigens (strain ATCC 14822 / DSM 2638 / NCIMB 8403 / VKM B-1763) (Desulfovibrio salexigens).